The primary structure comprises 123 residues: Small ribosomal subunit protein uS13 (123 aa).

The tract at residues 95–123 (GLPVRGQKTKTNARTRKGPKRAISGKKNK) is disordered.

It belongs to the universal ribosomal protein uS13 family. In terms of assembly, part of the 30S ribosomal subunit. Forms a loose heterodimer with protein S19. Forms two bridges to the 50S subunit in the 70S ribosome.

Its function is as follows. Located at the top of the head of the 30S subunit, it contacts several helices of the 16S rRNA. In the 70S ribosome it contacts the 23S rRNA (bridge B1a) and protein L5 of the 50S subunit (bridge B1b), connecting the 2 subunits; these bridges are implicated in subunit movement. Contacts the tRNAs in the A and P-sites. The protein is Small ribosomal subunit protein uS13 of Clostridium novyi (strain NT).